We begin with the raw amino-acid sequence, 579 residues long: F-box protein At5g39450 (579 aa).

One can recognise an F-box domain in the interval 16-62; sequence TCLLLSLPEDVIAVIARFVSPRDICNLSLCCKSLCDVVDSERIWLVQ.

This is F-box protein At5g39450 from Arabidopsis thaliana (Mouse-ear cress).